A 172-amino-acid polypeptide reads, in one-letter code: Disulfide bond formation protein B (172 aa).

At M1–Q11 the chain is on the cytoplasmic side. The helical transmembrane segment at F12 to Y28 threads the bilayer. The Periplasmic segment spans residues V29 to I46. C38 and C41 are disulfide-bonded. The chain crosses the membrane as a helical span at residues A47–P63. The Cytoplasmic segment spans residues R64–K70. A helical transmembrane segment spans residues V71–A88. Residues R89 to M145 are Periplasmic-facing. A disulfide bridge links C104 with C131. A helical transmembrane segment spans residues W146–K164. The Cytoplasmic portion of the chain corresponds to V165 to H172.

It belongs to the DsbB family.

Its subcellular location is the cell inner membrane. In terms of biological role, required for disulfide bond formation in some periplasmic proteins. Acts by oxidizing the DsbA protein. In Xanthomonas axonopodis pv. citri (strain 306), this protein is Disulfide bond formation protein B.